Reading from the N-terminus, the 160-residue chain is MAPK regulated corepressor interacting protein 2 (160 aa).

Met-1 bears the N-acetylmethionine mark. Residues 1–64 are disordered; that stretch reads MYTITKGPSK…GPWPLSSPGP (64 aa). Residue Arg-35 is modified to Omega-N-methylarginine. A compositionally biased stretch (pro residues) spans 37 to 61; it reads PAPPTSQPPRAQPFAQPPGPWPLSS. Ser-61 is modified (phosphoserine). The residue at position 65 (Arg-65) is an Omega-N-methylarginine. Ser-82 carries the post-translational modification Phosphoserine.

The protein belongs to the MCRIP family. Interacts with DDX6. Interacts with MCRIP1.

The protein resides in the cytoplasm. It is found in the stress granule. The protein localises to the nucleus. The sequence is that of MAPK regulated corepressor interacting protein 2 (MCRIP2) from Homo sapiens (Human).